We begin with the raw amino-acid sequence, 359 residues long: MDPNKFREKEISKKEALELFEDNEIIFELFKFADSLRREEVGDIVTYVVNRNINFTNICVGNCRFCAFRANENDKHAYFLDIDEIAKRAVEAKKFGCTEVCIQGGLHPKIDTYYQAEILKAVHEATKPYGDIHIHAFSPMEVYFGAENAGLDIKEALKILKENGLNSMPGTAAEILDDDIRAELCPNKIKTKEWIYIIKEAHKLGIPTTATMMYGHIEEYKHWVNHLFIIKEIQEETNGFTEFVPLSFMHKYAPIYKEGKAKAGATGIEDLKVFAVSRIIFKGLIKNIQASWVKLGKKMVQVALRCGANDVGGTLIEESISRSAGAEHGVYMSVEEIRDMIKRVGLIPKERTTLYKILE.

One can recognise a Radical SAM core domain in the interval 45–278 (VTYVVNRNIN…EDLKVFAVSR (234 aa)). [4Fe-4S] cluster contacts are provided by Cys59, Cys63, and Cys66.

Belongs to the radical SAM superfamily. CofH family. As to quaternary structure, consists of two subunits, CofG and CofH. Requires [4Fe-4S] cluster as cofactor.

It catalyses the reaction 5-amino-6-(D-ribitylamino)uracil + L-tyrosine + S-adenosyl-L-methionine = 5-amino-5-(4-hydroxybenzyl)-6-(D-ribitylimino)-5,6-dihydrouracil + 2-iminoacetate + 5'-deoxyadenosine + L-methionine + H(+). Its pathway is cofactor biosynthesis; coenzyme F0 biosynthesis. In terms of biological role, catalyzes the radical-mediated synthesis of 5-amino-5-(4-hydroxybenzyl)-6-(D-ribitylimino)-5,6-dihydrouracil from 5-amino-6-(D-ribitylamino)uracil and L-tyrosine. The protein is 5-amino-6-(D-ribitylamino)uracil--L-tyrosine 4-hydroxyphenyl transferase (cofH) of Methanocaldococcus jannaschii (strain ATCC 43067 / DSM 2661 / JAL-1 / JCM 10045 / NBRC 100440) (Methanococcus jannaschii).